We begin with the raw amino-acid sequence, 185 residues long: Ribosome-recycling factor (185 aa).

This sequence belongs to the RRF family.

It is found in the cytoplasm. Its function is as follows. Responsible for the release of ribosomes from messenger RNA at the termination of protein biosynthesis. May increase the efficiency of translation by recycling ribosomes from one round of translation to another. The polypeptide is Ribosome-recycling factor (Helicobacter hepaticus (strain ATCC 51449 / 3B1)).